Consider the following 97-residue polypeptide: Putative pterin-4-alpha-carbinolamine dehydratase (97 aa).

This sequence belongs to the pterin-4-alpha-carbinolamine dehydratase family.

It carries out the reaction (4aS,6R)-4a-hydroxy-L-erythro-5,6,7,8-tetrahydrobiopterin = (6R)-L-erythro-6,7-dihydrobiopterin + H2O. The chain is Putative pterin-4-alpha-carbinolamine dehydratase from Cyanothece sp. (strain PCC 7425 / ATCC 29141).